Consider the following 121-residue polypeptide: Somatostatin-1 (121 aa).

The N-terminal stretch at 1 to 24 is a signal peptide; that stretch reads MKMVSSSRLRCLLVLLLSLTASIS. Residues 25–105 constitute a propeptide that is removed on maturation; the sequence is CSFAGQRDSK…SGGPLLAPRE (81 aa). The segment at 76-99 is disordered; that stretch reads NFPLAEGGPEDAHADLERAASGGP. An intrachain disulfide couples cysteine 110 to cysteine 121.

This sequence belongs to the somatostatin family.

It is found in the secreted. Its function is as follows. Somatostatin inhibits the release of somatotropin. The chain is Somatostatin-1 (sst1) from Lophius americanus (American angler).